The chain runs to 270 residues: Formamidopyrimidine-DNA glycosylase (270 aa).

P2 serves as the catalytic Schiff-base intermediate with DNA. The active-site Proton donor is the E3. K58 (proton donor; for beta-elimination activity) is an active-site residue. DNA-binding residues include H91, R109, and R151. An FPG-type zinc finger spans residues 236 to 270 (QVYGKTGQQCPSCETPLKAVKLAARASVYCPECQS). R260 serves as the catalytic Proton donor; for delta-elimination activity.

This sequence belongs to the FPG family. In terms of assembly, monomer. It depends on Zn(2+) as a cofactor.

The catalysed reaction is Hydrolysis of DNA containing ring-opened 7-methylguanine residues, releasing 2,6-diamino-4-hydroxy-5-(N-methyl)formamidopyrimidine.. It catalyses the reaction 2'-deoxyribonucleotide-(2'-deoxyribose 5'-phosphate)-2'-deoxyribonucleotide-DNA = a 3'-end 2'-deoxyribonucleotide-(2,3-dehydro-2,3-deoxyribose 5'-phosphate)-DNA + a 5'-end 5'-phospho-2'-deoxyribonucleoside-DNA + H(+). Its function is as follows. Involved in base excision repair of DNA damaged by oxidation or by mutagenic agents. Acts as a DNA glycosylase that recognizes and removes damaged bases. Has a preference for oxidized purines, such as 7,8-dihydro-8-oxoguanine (8-oxoG). Has AP (apurinic/apyrimidinic) lyase activity and introduces nicks in the DNA strand. Cleaves the DNA backbone by beta-delta elimination to generate a single-strand break at the site of the removed base with both 3'- and 5'-phosphates. The polypeptide is Formamidopyrimidine-DNA glycosylase (Psychromonas ingrahamii (strain DSM 17664 / CCUG 51855 / 37)).